The chain runs to 99 residues: Ribonuclease P protein component 1 (99 aa).

Belongs to the eukaryotic/archaeal RNase P protein component 1 family. In terms of assembly, consists of a catalytic RNA component and at least 4-5 protein subunits.

Its subcellular location is the cytoplasm. It catalyses the reaction Endonucleolytic cleavage of RNA, removing 5'-extranucleotides from tRNA precursor.. Its function is as follows. Part of ribonuclease P, a protein complex that generates mature tRNA molecules by cleaving their 5'-ends. The chain is Ribonuclease P protein component 1 from Methanococcus vannielii.